The primary structure comprises 205 residues: Large ribosomal subunit protein uL3c (205 aa).

The tract at residues 129–154 (SRGPMSHGSKNHRQPGSIGAGTTPGR) is disordered.

The protein belongs to the universal ribosomal protein uL3 family. As to quaternary structure, part of the 50S ribosomal subunit.

It localises to the plastid. The protein localises to the chloroplast. One of the primary rRNA binding proteins, it binds directly near the 3'-end of the 23S rRNA, where it nucleates assembly of the 50S subunit. The chain is Large ribosomal subunit protein uL3c (rpl3) from Pyropia yezoensis (Susabi-nori).